A 395-amino-acid chain; its full sequence is Acid ceramidase (395 aa).

Residues 1-21 (MLGRSRLALVLLAAAVSCAVA) form the signal peptide. Cys31 and Cys340 form a disulfide bridge. Cys143 acts as the Nucleophile in catalysis. 6 N-linked (GlcNAc...) asparagine glycosylation sites follow: Asn173, Asn195, Asn259, Asn286, Asn342, and Asn348. A disulfide bridge connects residues Cys388 and Cys392.

This sequence belongs to the acid ceramidase family. As to quaternary structure, heterodimer; disulfide-linked. The heterodimer is composed of the disulfide-linked alpha and beta chains produced by autocatalytic cleavage of the precursor. Post-translationally, N-glycosylated. In terms of processing, proteolytically cleaved into two chains alpha and beta that remain associated via a disulfide bond. Cleavage gives rise to a conformation change that activates the enzyme. The same catalytic Cys residue mediates the autoproteolytic cleavage and subsequent hydrolysis of lipid substrates. The beta chain may undergo an additional C-terminal processing.

Its subcellular location is the lysosome. It is found in the secreted. It catalyses the reaction an N-acylsphing-4-enine + H2O = sphing-4-enine + a fatty acid. It carries out the reaction N-dodecanoylsphing-4-enine + H2O = dodecanoate + sphing-4-enine. The catalysed reaction is N-tetradecanoylsphing-4-enine + H2O = tetradecanoate + sphing-4-enine. The enzyme catalyses N-hexadecanoylsphing-4-enine + H2O = sphing-4-enine + hexadecanoate. It catalyses the reaction N-octadecanoylsphing-4-enine + H2O = sphing-4-enine + octadecanoate. It carries out the reaction N-dodecanoyl-(4R)-hydroxysphinganine + H2O = (4R)-hydroxysphinganine + dodecanoate. The catalysed reaction is N-(dodecanoyl)-sphinganine + H2O = dodecanoate + sphinganine. The enzyme catalyses N-(acetyl)-sphing-4-enine + H2O = sphing-4-enine + acetate. It catalyses the reaction N-(hexanoyl)sphing-4-enine + H2O = hexanoate + sphing-4-enine. It carries out the reaction N-octanoylsphing-4-enine + H2O = octanoate + sphing-4-enine. The catalysed reaction is N-(9Z-octadecenoyl)-sphing-4-enine + H2O = sphing-4-enine + (9Z)-octadecenoate. The enzyme catalyses N-dodecanoylethanolamine + H2O = dodecanoate + ethanolamine. The protein operates within lipid metabolism; sphingolipid metabolism. In terms of biological role, lysosomal ceramidase that hydrolyzes sphingolipid ceramides into sphingosine and free fatty acids at acidic pH. Ceramides, sphingosine, and its phosphorylated form sphingosine-1-phosphate are bioactive lipids that mediate cellular signaling pathways regulating several biological processes including cell proliferation, apoptosis and differentiation. Has a higher catalytic efficiency towards C12-ceramides versus other ceramides. Also catalyzes the reverse reaction allowing the synthesis of ceramides from fatty acids and sphingosine. For the reverse synthetic reaction, the natural sphingosine D-erythro isomer is more efficiently utilized as a substrate compared to D-erythro-dihydrosphingosine and D-erythro-phytosphingosine, while the fatty acids with chain lengths of 12 or 14 carbons are the most efficiently used. Also has an N-acylethanolamine hydrolase activity. By regulating the levels of ceramides, sphingosine and sphingosine-1-phosphate in the epidermis, mediates the calcium-induced differentiation of epidermal keratinocytes. Also indirectly regulates tumor necrosis factor/TNF-induced apoptosis. By regulating the intracellular balance between ceramides and sphingosine, in adrenocortical cells, probably also acts as a regulator of steroidogenesis. The chain is Acid ceramidase from Macaca fascicularis (Crab-eating macaque).